The chain runs to 475 residues: Rho GTPase-activating protein 15 (475 aa).

Residues 1–22 (MQKSTNSDTSVETLNSTRQGTG) show a composition bias toward polar residues. The tract at residues 1–23 (MQKSTNSDTSVETLNSTRQGTGA) is disordered. Residues Ser-43, Ser-103, Ser-196, Ser-199, and Ser-243 each carry the phosphoserine modification. In terms of domain architecture, PH spans 79–189 (MVEKEGYLQK…WFHAIKNAID (111 aa)). Residues 281-470 (SHLHKVCERE…LMLSEYSKIF (190 aa)) form the Rho-GAP domain.

As to expression, expressed in lung, liver and lymphoid cells.

The protein resides in the cytoplasm. It localises to the membrane. GTPase activator for the Rho-type GTPases by converting them to an inactive GDP-bound state. Has activity toward RAC1. Overexpression results in an increase in actin stress fibers and cell contraction. The protein is Rho GTPase-activating protein 15 (ARHGAP15) of Homo sapiens (Human).